The chain runs to 270 residues: Tryptophan synthase alpha chain (270 aa).

Active-site proton acceptor residues include Glu49 and Asp60.

Belongs to the TrpA family. In terms of assembly, tetramer of two alpha and two beta chains.

The catalysed reaction is (1S,2R)-1-C-(indol-3-yl)glycerol 3-phosphate + L-serine = D-glyceraldehyde 3-phosphate + L-tryptophan + H2O. Its pathway is amino-acid biosynthesis; L-tryptophan biosynthesis; L-tryptophan from chorismate: step 5/5. In terms of biological role, the alpha subunit is responsible for the aldol cleavage of indoleglycerol phosphate to indole and glyceraldehyde 3-phosphate. The sequence is that of Tryptophan synthase alpha chain from Pseudomonas syringae pv. tomato (strain ATCC BAA-871 / DC3000).